We begin with the raw amino-acid sequence, 372 residues long: C-X-C chemokine receptor type 5 (372 aa).

At M1–P55 the chain is on the extracellular side. N-linked (GlcNAc...) asparagine glycosylation is present at N28. A helical transmembrane segment spans residues V56–L76. The Cytoplasmic segment spans residues E77–T88. The chain crosses the membrane as a helical span at residues F89–A109. The Extracellular portion of the chain corresponds to E110–T124. C122 and C202 are disulfide-bonded. The chain crosses the membrane as a helical span at residues V125–V145. Residues D146–H167 are Cytoplasmic-facing. A helical transmembrane segment spans residues I168 to A188. At K189 to R219 the chain is on the extracellular side. N196 carries N-linked (GlcNAc...) asparagine glycosylation. Residues F220 to G240 traverse the membrane as a helical segment. Topologically, residues V241 to R259 are cytoplasmic. The chain crosses the membrane as a helical span at residues V260 to F280. At L281 to I304 the chain is on the extracellular side. The helical transmembrane segment at T305 to A325 threads the bilayer. Topologically, residues G326–F372 are cytoplasmic.

Belongs to the G-protein coupled receptor 1 family. Expression in mature B-cells and Burkitt lymphoma cells.

It localises to the cell membrane. In terms of biological role, cytokine receptor that binds to B-lymphocyte chemoattractant (BLC). Involved in B-cell migration into B-cell follicles of spleen and Peyer patches but not into those of mesenteric or peripheral lymph nodes. May have a regulatory function in Burkitt lymphoma (BL) lymphomagenesis and/or B-cell differentiation. The chain is C-X-C chemokine receptor type 5 (CXCR5) from Homo sapiens (Human).